The following is a 228-amino-acid chain: Protein crossbronx homolog (228 aa).

Positions 14–168 (LQEYKILAEY…VEQCVEDSQR (155 aa)) constitute a UBC core domain.

This sequence belongs to the ubiquitin-conjugating enzyme family. FTS subfamily.

The polypeptide is Protein crossbronx homolog (Anopheles gambiae (African malaria mosquito)).